Reading from the N-terminus, the 354-residue chain is Serum paraoxonase/arylesterase 2 (354 aa).

Cysteine 42 and cysteine 352 form a disulfide bridge. Aspartate 53 and aspartate 54 together coordinate Ca(2+). Histidine 114 (proton acceptor) is an active-site residue. Ca(2+) contacts are provided by isoleucine 116, asparagine 167, aspartate 168, and asparagine 223. N-linked (GlcNAc...) asparagine glycosylation occurs at asparagine 254. Positions 268 and 269 each coordinate Ca(2+). Asparagine 269 and asparagine 323 each carry an N-linked (GlcNAc...) asparagine glycan.

This sequence belongs to the paraoxonase family. In terms of assembly, homotrimer. Ca(2+) is required as a cofactor. In terms of processing, glycosylated. Post-translationally, the signal sequence is not cleaved.

It is found in the membrane. It carries out the reaction a phenyl acetate + H2O = a phenol + acetate + H(+). The catalysed reaction is an N-acyl-L-homoserine lactone + H2O = an N-acyl-L-homoserine + H(+). Functionally, capable of hydrolyzing lactones and a number of aromatic carboxylic acid esters. The sequence is that of Serum paraoxonase/arylesterase 2 (PON2) from Canis lupus familiaris (Dog).